The chain runs to 479 residues: Serine palmitoyltransferase 1 (479 aa).

Over 1–16 the chain is Lumenal; the sequence is MFLFDIYNNILYYTKE. Residues 17-37 form a helical membrane-spanning segment; that stretch reads FIVTSTSPNLFIHGLMAVFII. Residues 38–479 lie on the Cytoplasmic side of the membrane; the sequence is YLLTKRPFKP…KCTSFVLESN (442 aa).

Belongs to the class-II pyridoxal-phosphate-dependent aminotransferase family. As to quaternary structure, forms a heterodimer with sptB. Pyridoxal 5'-phosphate serves as cofactor.

It localises to the endoplasmic reticulum membrane. The catalysed reaction is L-serine + hexadecanoyl-CoA + H(+) = 3-oxosphinganine + CO2 + CoA. Its pathway is lipid metabolism; sphingolipid metabolism. Component of serine palmitoyltransferase (SPT), which catalyzes the committed step in the synthesis of sphingolipids, the condensation of serine with palmitoyl CoA to form the long chain base 3-ketosphinganine. This Dictyostelium discoideum (Social amoeba) protein is Serine palmitoyltransferase 1 (sptA).